The following is a 256-amino-acid chain: uncharacterized protein (256 aa).

Disordered stretches follow at residues 1 to 38 (MGKT…PNRD) and 51 to 75 (PRPS…RCPQ).

This is an uncharacterized protein from Homo sapiens (Human).